Reading from the N-terminus, the 660-residue chain is MDSVNATAREAKESKISESEILESSIASATQGVLGFQQSDGHWVFELEADCTIPAEYVLLRHYLAEPVDTVLEAKIGNYLRRVQGAHGGWPLVHDGEFDMSASVKAYFALKMIGDSIDAPHMVRAREAIHARGGAIHSNVFTRFMLAMFGIVTWRAVPVLPIEIMLLPFWSPFHINKISYWARTTMVPLMVIAALKPRAKNPKGVGIDELFLQDPRSIGMTAKAPHQSMAWFLLFRSLDAILRVIEPLFPKSLRKRAIDTALAFSEERLNGEDGMGAIYPPMANLVMMYDALGKDENYPPRAVTRRGIDKLLVIGDDEAYCQPCVSPVWDTTLTAHALLEAGGDKAVPAAKHGLDWLIPKQELEVKGDWAVKRPDVRPGGWAFQYNNAYYPDLDDTAVVVMSMDRMRREHGVTGYDSAIDRGREWIEGMQSDDGGWAAFDVNNLEYYLNNIPFSDHGALLDPPTEDVTARCVSMLAQLGETAKTSKHVADGVAYLRKTQHPEGSWYGRWGMNFIYGTWSVLCALNMAGVRHDDPMIRKAADWLASIQNKDGGWGEDAVSYRLDYKGWEAAPSTASQTAWALLALMAAGEVDHPAVARGVEYLIATQNEKGLWDEQRYTATGFPRVFYLRYHGYSKFFPLWALARYRNLRNTNSRVVGVGM.

The stretch at 73-114 (EAKIGNYLRRVQGAHGGWPLVHDGEFDMSASVKAYFALKMIG) is one PFTB 1 repeat. D394 (proton donor) is an active-site residue. PFTB repeat units follow at residues 419 to 460 (IDRG…GALL) and 536 to 586 (IRKA…ALMA).

Belongs to the terpene cyclase/mutase family.

It is found in the cell membrane. The catalysed reaction is squalene = hop-22(29)-ene. It catalyses the reaction squalene + H2O = hopan-22-ol. It functions in the pathway secondary metabolite biosynthesis; hopanoid biosynthesis. Catalyzes the cyclization of squalene into hopene. The chain is Squalene--hopene cyclase (shc) from Bradyrhizobium diazoefficiens (strain JCM 10833 / BCRC 13528 / IAM 13628 / NBRC 14792 / USDA 110).